The chain runs to 696 residues: DNA ligase (696 aa).

NAD(+) contacts are provided by residues 36 to 40 (DAEYD), 85 to 86 (SL), and glutamate 123. Residue lysine 125 is the N6-AMP-lysine intermediate of the active site. Positions 146, 181, 319, and 343 each coordinate NAD(+). Residues cysteine 437, cysteine 440, cysteine 455, and cysteine 461 each contribute to the Zn(2+) site. Positions 618–696 (PEGTSLAGKT…EDGLKALLGL (79 aa)) constitute a BRCT domain.

The protein belongs to the NAD-dependent DNA ligase family. LigA subfamily. Requires Mg(2+) as cofactor. Mn(2+) serves as cofactor.

It carries out the reaction NAD(+) + (deoxyribonucleotide)n-3'-hydroxyl + 5'-phospho-(deoxyribonucleotide)m = (deoxyribonucleotide)n+m + AMP + beta-nicotinamide D-nucleotide.. DNA ligase that catalyzes the formation of phosphodiester linkages between 5'-phosphoryl and 3'-hydroxyl groups in double-stranded DNA using NAD as a coenzyme and as the energy source for the reaction. It is essential for DNA replication and repair of damaged DNA. This is DNA ligase from Bordetella pertussis (strain Tohama I / ATCC BAA-589 / NCTC 13251).